A 256-amino-acid chain; its full sequence is MNDPRKGADAEPTTHFGYQNVPESQKAKKVAEVFHSVAAKYDLMNDLMSGGIHRLWKRFTIELSGVRSGNRVLDIAGGTGDLTRQFSRLVGPTGEVVLADINASMLKVGRDKLLDKGVSGNVSFVQADAEKLPFPDNHFDCVTIAFGLRNVTHKDEAIRSMLRVLKPGGRLLVLEFSKPSSNLLSKAYDAYSFSLLPLMGKLVTNDSESYRYLAESIRMHPDQETLKAMMVEAGFDRVTYHNMTGGIVALHRGIKP.

Residues threonine 79, aspartate 100, and 128-129 contribute to the S-adenosyl-L-methionine site; that span reads DA.

Belongs to the class I-like SAM-binding methyltransferase superfamily. MenG/UbiE family.

It catalyses the reaction a 2-demethylmenaquinol + S-adenosyl-L-methionine = a menaquinol + S-adenosyl-L-homocysteine + H(+). It carries out the reaction a 2-methoxy-6-(all-trans-polyprenyl)benzene-1,4-diol + S-adenosyl-L-methionine = a 5-methoxy-2-methyl-3-(all-trans-polyprenyl)benzene-1,4-diol + S-adenosyl-L-homocysteine + H(+). It participates in quinol/quinone metabolism; menaquinone biosynthesis; menaquinol from 1,4-dihydroxy-2-naphthoate: step 2/2. The protein operates within cofactor biosynthesis; ubiquinone biosynthesis. Functionally, methyltransferase required for the conversion of demethylmenaquinol (DMKH2) to menaquinol (MKH2) and the conversion of 2-polyprenyl-6-methoxy-1,4-benzoquinol (DDMQH2) to 2-polyprenyl-3-methyl-6-methoxy-1,4-benzoquinol (DMQH2). In Pseudomonas aeruginosa (strain LESB58), this protein is Ubiquinone/menaquinone biosynthesis C-methyltransferase UbiE.